A 438-amino-acid chain; its full sequence is Serine hydroxymethyltransferase (438 aa).

(6S)-5,6,7,8-tetrahydrofolate-binding positions include Leu119 and Gly123–Leu125. The residue at position 228 (Lys228) is an N6-(pyridoxal phosphate)lysine. Ser370–Phe372 is a binding site for (6S)-5,6,7,8-tetrahydrofolate.

The protein belongs to the SHMT family. As to quaternary structure, homodimer. The cofactor is pyridoxal 5'-phosphate.

The protein resides in the cytoplasm. The enzyme catalyses (6R)-5,10-methylene-5,6,7,8-tetrahydrofolate + glycine + H2O = (6S)-5,6,7,8-tetrahydrofolate + L-serine. The protein operates within one-carbon metabolism; tetrahydrofolate interconversion. It participates in amino-acid biosynthesis; glycine biosynthesis; glycine from L-serine: step 1/1. In terms of biological role, catalyzes the reversible interconversion of serine and glycine with tetrahydrofolate (THF) serving as the one-carbon carrier. This reaction serves as the major source of one-carbon groups required for the biosynthesis of purines, thymidylate, methionine, and other important biomolecules. Also exhibits THF-independent aldolase activity toward beta-hydroxyamino acids, producing glycine and aldehydes, via a retro-aldol mechanism. This chain is Serine hydroxymethyltransferase, found in Chlorobium chlorochromatii (strain CaD3).